The primary structure comprises 485 residues: Peptidyl-prolyl isomerase CWC27 (485 aa).

The 157-residue stretch at 11 to 167 folds into the PPIase cyclophilin-type domain; that stretch reads SSGLVDLVTS…YPIKLHEVRV (157 aa). The segment at 173–485 is disordered; it reads DDLQPRTTKK…PQQRRQRSII (313 aa). Basic and acidic residues-rich tracts occupy residues 184-204 and 236-247; these read RIAEERRKKHEMETRVAEEQK and SSHDLLKDDKHL. Composition is skewed to polar residues over residues 249 to 270, 278 to 292, 315 to 325, and 353 to 370; these read RQTIETSKSTKANTPAVSANIS, AQSSSSTTPPAVTKQ, PSDQKASSSTG, and ALLSFQSRLRTRPSSTTP. The span at 381 to 398 shows a compositional bias: acidic residues; that stretch reads DEVEEEAGEYGASDDDDD. Residues 428 to 465 show a composition bias toward basic and acidic residues; the sequence is LDPRDHTDRERNPKAESSRDGKRGRDWVEHDRKYQNDR. A compositionally biased stretch (basic residues) spans 466–485; sequence SRRHREHDKHPQQRRQRSII.

It belongs to the cyclophilin-type PPIase family. CWC27 subfamily. As to quaternary structure, associated with the spliceosome.

It localises to the cytoplasm. The protein resides in the nucleus. It catalyses the reaction [protein]-peptidylproline (omega=180) = [protein]-peptidylproline (omega=0). PPIases accelerate the folding of proteins. It catalyzes the cis-trans isomerization of proline imidic peptide bonds in oligopeptides. Involved in pre-mRNA splicing. The sequence is that of Peptidyl-prolyl isomerase CWC27 (CWC27) from Mycosarcoma maydis (Corn smut fungus).